We begin with the raw amino-acid sequence, 135 residues long: ATP synthase epsilon chain (135 aa).

This sequence belongs to the ATPase epsilon chain family. As to quaternary structure, F-type ATPases have 2 components, CF(1) - the catalytic core - and CF(0) - the membrane proton channel. CF(1) has five subunits: alpha(3), beta(3), gamma(1), delta(1), epsilon(1). CF(0) has three main subunits: a, b and c.

Its subcellular location is the cell inner membrane. Produces ATP from ADP in the presence of a proton gradient across the membrane. This Brucella abortus (strain S19) protein is ATP synthase epsilon chain.